A 222-amino-acid chain; its full sequence is Germin-like protein subfamily 1 member 16 (222 aa).

Residues 1–22 form the signal peptide; the sequence is MRVSQSLIPFAIIALVLSFVNA. A disulfide bond links Cys32 and Cys48. A Cupin type-1 domain is found at 62-213; that stretch reads SGLNVPGNTN…AFQLDANVVK (152 aa). N-linked (GlcNAc...) asparagine glycosylation is present at Asn77. 4 residues coordinate Mn(2+): His110, His112, Glu117, and His159.

This sequence belongs to the germin family. In terms of assembly, oligomer (believed to be a pentamer but probably hexamer).

Its subcellular location is the secreted. The protein resides in the extracellular space. The protein localises to the apoplast. Functionally, may play a role in plant defense. Probably has no oxalate oxidase activity even if the active site is conserved. The polypeptide is Germin-like protein subfamily 1 member 16 (Arabidopsis thaliana (Mouse-ear cress)).